The following is a 459-amino-acid chain: DnaJ protein homolog XDJ1 (459 aa).

A J domain is found at 7–79 (GDRLYDVLGV…KSHYDLYGDD (73 aa)). The CR-type zinc-finger motif lies at 146 to 240 (GKKLKFDLKR…CAGLGLLSKK (95 aa)). CXXCXGXG motif repeat units lie at residues 159-166 (CIKCHGSG), 181-188 (CESCAGKG), 208-215 (CEKCNGKG), and 228-235 (CPDCAGLG).

The protein resides in the mitochondrion outer membrane. This Saccharomyces cerevisiae (strain ATCC 204508 / S288c) (Baker's yeast) protein is DnaJ protein homolog XDJ1 (XDJ1).